Reading from the N-terminus, the 198-residue chain is Probable opine utilization operon repressor (198 aa).

It participates in opine metabolism; mannopine biosynthesis [regulation]. Its function is as follows. Possible repressor for genes for mannityl-opine utilization and / or plasmid conjugative transfer. This Rhizobium rhizogenes (Agrobacterium rhizogenes) protein is Probable opine utilization operon repressor (opnR).